The primary structure comprises 420 residues: Fasciclin-like arabinogalactan protein 4 (420 aa).

An N-terminal signal peptide occupies residues 1–28 (MANVISISHFTLLALPYLLLLLSSTAAA). FAS1 domains lie at 29 to 177 (INVT…DSLI) and 205 to 351 (GINL…SKVL). N-linked (GlcNAc...) asparagine glycans are attached at residues Asn30, Asn40, Asn135, Asn154, Asn167, Asn207, Asn312, and Asn317. Residues 360–388 (SGQPVATAPPQEISLSPESSSEQPSRLVS) are disordered. Low complexity predominate over residues 368 to 384 (PPQEISLSPESSSEQPS). Ser396 carries GPI-anchor amidated serine lipidation. Positions 397-420 (GAVKRPLGFLVLWCWCIAFCYVLV) are cleaved as a propeptide — removed in mature form.

This sequence belongs to the fasciclin-like AGP family. Expressed in all plant organs and tissues, including guard cells in the leaf.

Its subcellular location is the cell membrane. Functionally, may be a cell surface adhesion protein that is required for normal cell expansion. The chain is Fasciclin-like arabinogalactan protein 4 (FLA4) from Arabidopsis thaliana (Mouse-ear cress).